We begin with the raw amino-acid sequence, 328 residues long: Flotillin-like protein FloA (328 aa).

2 consecutive transmembrane segments (helical) span residues 1–21 (MFGL…LVLF) and 26–46 (VGLW…TLVG).

The protein belongs to the flotillin-like FloA family. As to quaternary structure, homooligomerizes.

Its subcellular location is the cell membrane. It is found in the membrane raft. Its function is as follows. Found in functional membrane microdomains (FMM) that may be equivalent to eukaryotic membrane rafts. FMMs are highly dynamic and increase in number as cells age. Flotillins are thought to be important factors in membrane fluidity. This Staphylococcus haemolyticus (strain JCSC1435) protein is Flotillin-like protein FloA.